A 408-amino-acid chain; its full sequence is Methyltransferase/ribosomally synthesized type I borosin cyclic peptide precursor sveMA (408 aa).

Positions 1–250 (MASSTHPKRG…TSSTFYIPPR (250 aa)) are methyltransferase domain. Active-site residues include Arg73, Tyr77, and Tyr99. Residues Tyr99, His101, Ile104, Ala131, Gln173, Gly211, Ser242, and Thr244 each coordinate S-adenosyl-L-methionine. A clasp domain region spans residues 251–375 (DSEAIDYDMV…GSVYKVMSAT (125 aa)). Positions 371–385 (VMSATQADIELGKEP) are precursor leader. N-methylvaline is present on Val401. Position 402 is an N-methylisoleucine (Ile402). N-methylvaline is present on Val406.

In the N-terminal section; belongs to the precorrin methyltransferase family. As to quaternary structure, homodimer. In terms of processing, sveMA automethylates at Val-401, Ile-402 and Val-406 before being processed by a prolyloligopeptidase which likely forms a peptidyl ester upon removal of the follower propeptide, which then undergoes macrocyclization with the N-terminus of the modified core peptide. Peptide backbone alpha-N-methylations change the physicochemical properties of amide bonds to provide structural constraints and other favorable characteristics including biological membrane permeability to peptides.

It functions in the pathway secondary metabolite biosynthesis. Fusion protein of the methyltransferase sveM and a type I borosin core peptide; part of the gene cluster that mediates the biosynthesis of a type I borosin, a highly methylated cyclic peptide with potent biological activities. Type I borosins derive from the C-terminus of the fusion protein, and it is the same protein that methylates its own C-terminus using S-adenosyl methionine (SAM). The C-terminus is subsequently cleaved off and macrocyclized by a prolyloligopeptidase to give the final product. The protein is Methyltransferase/ribosomally synthesized type I borosin cyclic peptide precursor sveMA of Serendipita vermifera subsp. bescii (Mycorrhizal fungus).